We begin with the raw amino-acid sequence, 585 residues long: T-cell surface protein tactile (585 aa).

Residues 1 to 21 (MEKKWKYCAVYYIIQIHFVKG) form the signal peptide. The Extracellular portion of the chain corresponds to 22-519 (VWEKTVNTEE…IVVNKPKDGM (498 aa)). In terms of domain architecture, Ig-like V-type 1 spans 38–125 (GSDVNLTCQT…YECMLVLYPE (88 aa)). Asparagine 42, asparagine 97, asparagine 107, asparagine 148, asparagine 156, asparagine 166, asparagine 200, asparagine 215, asparagine 277, asparagine 278, asparagine 300, asparagine 350, and asparagine 368 each carry an N-linked (GlcNAc...) asparagine glycan. Cysteine 45 and cysteine 118 are joined by a disulfide. The 83-residue stretch at 156–238 (NQTLEIPCFQ…YRLHLSPVQI (83 aa)) folds into the Ig-like V-type 2 domain. The cysteines at positions 163 and 247 are disulfide-linked. An Ig-like C2-type domain is found at 269 to 375 (PEIPVIVENN…VWNISSEKIT (107 aa)). Cysteine 290 and cysteine 355 are joined by a disulfide. Polar residues-rich tracts occupy residues 385-418 (TDPP…SSVT), 426-452 (RPNT…SSGT), and 460-475 (RIPS…GAGS). Residues 385–475 (TDPPLSVTES…YSSSPSGAGS (91 aa)) form a disordered region. The N-linked (GlcNAc...) asparagine glycan is linked to asparagine 435. The N-linked (GlcNAc...) asparagine glycan is linked to asparagine 497. The chain crosses the membrane as a helical span at residues 520–540 (SWPVIVAALLFCCMILFGLGV). Residues 541-585 (RKWCQYQKEIMERPPPFKPPPPPIKYTCIQEPNESDLPYHEMETL) are Cytoplasmic-facing.

Homodimer; disulfide-linked. Interacts with PVR. Expressed on normal T-cell lines and clones, and some transformed T-cells, but no other cultured cell lines tested. It is expressed at very low levels on activated B-cells.

Its subcellular location is the membrane. In terms of biological role, may be involved in adhesive interactions of activated T and NK cells during the late phase of the immune response. Promotes NK cell-target adhesion by interacting with PVR present on target cells. May function at a time after T and NK cells have penetrated the endothelium using integrins and selectins, when they are actively engaging diseased cells and moving within areas of inflammation. This chain is T-cell surface protein tactile (CD96), found in Homo sapiens (Human).